Consider the following 267-residue polypeptide: Phosphate import ATP-binding protein PstB (267 aa).

The 242-residue stretch at 21–262 (VAARNLDFYY…PSKQQTEDYI (242 aa)) folds into the ABC transporter domain. Residue 53–60 (GPSGCGKS) coordinates ATP.

Belongs to the ABC transporter superfamily. Phosphate importer (TC 3.A.1.7) family. The complex is composed of two ATP-binding proteins (PstB), two transmembrane proteins (PstC and PstA) and a solute-binding protein (PstS).

Its subcellular location is the cell inner membrane. The catalysed reaction is phosphate(out) + ATP + H2O = ADP + 2 phosphate(in) + H(+). Functionally, part of the ABC transporter complex PstSACB involved in phosphate import. Responsible for energy coupling to the transport system. This Xanthomonas campestris pv. campestris (strain 8004) protein is Phosphate import ATP-binding protein PstB.